A 205-amino-acid chain; its full sequence is Probable GTP-binding protein EngB (205 aa).

The region spanning 21–196 (QVPEVAFAGR…VHEVSKCVKE (176 aa)) is the EngB-type G domain. Residues 29 to 36 (GRSNVGKS), 56 to 60 (GSTRQ), 74 to 77 (DLPG), 141 to 144 (TKID), and 172 to 177 (IIGTSS) each bind GTP. Ser-36 and Thr-58 together coordinate Mg(2+).

Belongs to the TRAFAC class TrmE-Era-EngA-EngB-Septin-like GTPase superfamily. EngB GTPase family. It depends on Mg(2+) as a cofactor.

In terms of biological role, necessary for normal cell division and for the maintenance of normal septation. The sequence is that of Probable GTP-binding protein EngB from Anaplasma marginale (strain Florida).